The sequence spans 505 residues: Deoxyguanosinetriphosphate triphosphohydrolase (505 aa).

One can recognise an HD domain in the interval 66–273 (RLTHSMEVQQ…MEAADDISYC (208 aa)).

Belongs to the dGTPase family. Type 1 subfamily. As to quaternary structure, homotetramer. The cofactor is Mg(2+).

It carries out the reaction dGTP + H2O = 2'-deoxyguanosine + triphosphate + H(+). In terms of biological role, dGTPase preferentially hydrolyzes dGTP over the other canonical NTPs. In Salmonella schwarzengrund (strain CVM19633), this protein is Deoxyguanosinetriphosphate triphosphohydrolase.